The primary structure comprises 512 residues: Bestrophin-2 (512 aa).

Residues Met1–Leu31 lie on the Cytoplasmic side of the membrane. Ala10 lines the Ca(2+) pocket. Residues Leu32–Arg51 traverse the membrane as a helical segment. The Extracellular segment spans residues Phe52–Arg60. A helical membrane pass occupies residues Tyr61–Leu82. At Gly83–Gln238 the chain is on the cytoplasmic side. Residues Val239–Arg255 form a helical membrane-spanning segment. Over Gln256–Pro274 the chain is Extracellular. Residues Ile275 to Leu288 traverse the membrane as a helical segment. Residues Lys289 to Ala512 lie on the Cytoplasmic side of the membrane. Ca(2+)-binding residues include Gln293, Asn296, Asp301, and Asp304. The interval Val453–Ala512 is disordered.

Belongs to the anion channel-forming bestrophin (TC 1.A.46) family. Calcium-sensitive chloride channel subfamily. Pentamer. Interacts with GLUL; this interaction tethers a fraction of GLUL to the membrane, causing a decrease of cytosolic glutamine synthase (GS) activity and inhibits the chloride channel activity of BEST2 by affecting the gating at the aperture in the absence of intracellular glutamate.

It is found in the cell membrane. It localises to the basolateral cell membrane. The enzyme catalyses chloride(in) = chloride(out). It carries out the reaction iodide(out) = iodide(in). It catalyses the reaction hydrogencarbonate(in) = hydrogencarbonate(out). The catalysed reaction is L-glutamate(out) = L-glutamate(in). The enzyme catalyses L-glutamine(out) = L-glutamine(in). With respect to regulation, chloride channel activity is allosterically inhibited by GLUL/glutamine synthase (GS) which affects the gating at the aperture in the absence of intracellular glutamate. Inhibitory effect of GLUL is relieved upon increasing of intracellular level of L-glutamate. Its function is as follows. Ligand-gated anion channel that allows the movement of anions across cell membranes when activated by calcium (Ca2+). Transports a large specter of anions, namely mediates the movement of chloride, L-glutamate and iodide. Calcium-binding triggers the dilation of the aperture, but calcium-dependent gating is only effective when the size of the passing anion is bigger than the closed aperture. Mediates the calcium-activated hydrogencarbonate movement and participates in colonic hydrogencarbonate secretion concomitant with mucin secretion. In non-pigmented epithelium (NPE), mediates the efflux of intracellular L-glutamate; binding of intracellular L-glutamate activates and open both the neck and the aperture of the channel, leading to L-glutamate exit promoting chloride influx movement from the extracellular side in trans. Also exhibits a directional permeability for intracellular glutamine, in a similar manner as for L-glutamate. The chain is Bestrophin-2 from Bos taurus (Bovine).